A 478-amino-acid polypeptide reads, in one-letter code: Protein nucleotidyltransferase YdiU (478 aa).

Residues G84, G86, R87, K107, D119, G120, R170, and R177 each coordinate ATP. The active-site Proton acceptor is the D246. Positions 247 and 256 each coordinate Mg(2+). ATP is bound at residue D256.

This sequence belongs to the SELO family. Mg(2+) is required as a cofactor. The cofactor is Mn(2+).

The enzyme catalyses L-seryl-[protein] + ATP = 3-O-(5'-adenylyl)-L-seryl-[protein] + diphosphate. It carries out the reaction L-threonyl-[protein] + ATP = 3-O-(5'-adenylyl)-L-threonyl-[protein] + diphosphate. It catalyses the reaction L-tyrosyl-[protein] + ATP = O-(5'-adenylyl)-L-tyrosyl-[protein] + diphosphate. The catalysed reaction is L-histidyl-[protein] + UTP = N(tele)-(5'-uridylyl)-L-histidyl-[protein] + diphosphate. The enzyme catalyses L-seryl-[protein] + UTP = O-(5'-uridylyl)-L-seryl-[protein] + diphosphate. It carries out the reaction L-tyrosyl-[protein] + UTP = O-(5'-uridylyl)-L-tyrosyl-[protein] + diphosphate. In terms of biological role, nucleotidyltransferase involved in the post-translational modification of proteins. It can catalyze the addition of adenosine monophosphate (AMP) or uridine monophosphate (UMP) to a protein, resulting in modifications known as AMPylation and UMPylation. The chain is Protein nucleotidyltransferase YdiU from Escherichia coli O139:H28 (strain E24377A / ETEC).